We begin with the raw amino-acid sequence, 578 residues long: Oxygen sensor histidine kinase response regulator DevS/DosS (578 aa).

2 consecutive GAF domains span residues 63–200 (DLEA…GIAV) and 231–369 (EPAT…ALAW). His-149 contacts heme. Residues 383–578 (VLTDRDRIAR…VLRWSAPLSQ (196 aa)) form the Histidine kinase domain. A Phosphohistidine; by autocatalysis modification is found at His-395.

It depends on Mg(2+) as a cofactor. Heme is required as a cofactor.

It is found in the cytoplasm. It catalyses the reaction ATP + protein L-histidine = ADP + protein N-phospho-L-histidine.. Member of the two-component regulatory system DevR/DevS (DosR/DosS) involved in onset of the dormancy response. Regulates an approximately 48-member regulon. Required for full induction of the DevR (DosR) regulon; acts later than DosT to positively regulate expression of the DevR regulon during adaptation to anaerobiosis. Characterized as an oxygen sensor; O(2) acts as a switch, with O(2)-bound Fe(2+) protein inactive in autophosphorylation. Has also been suggested to act as a redox sensor, or perhaps as a dual oxygen/redox sensor. Donates a phosphate group to transcriptional regulator DevR (DosR). The sequence is that of Oxygen sensor histidine kinase response regulator DevS/DosS (devS) from Mycobacterium tuberculosis (strain CDC 1551 / Oshkosh).